The following is a 353-amino-acid chain: Histidinol-phosphate aminotransferase (353 aa).

Lys-211 carries the post-translational modification N6-(pyridoxal phosphate)lysine.

Belongs to the class-II pyridoxal-phosphate-dependent aminotransferase family. Histidinol-phosphate aminotransferase subfamily. Homodimer. Pyridoxal 5'-phosphate serves as cofactor.

It catalyses the reaction L-histidinol phosphate + 2-oxoglutarate = 3-(imidazol-4-yl)-2-oxopropyl phosphate + L-glutamate. The protein operates within amino-acid biosynthesis; L-histidine biosynthesis; L-histidine from 5-phospho-alpha-D-ribose 1-diphosphate: step 7/9. In Klebsiella pneumoniae subsp. pneumoniae (strain ATCC 700721 / MGH 78578), this protein is Histidinol-phosphate aminotransferase.